The sequence spans 310 residues: Malate dehydrogenase (310 aa).

NAD(+) contacts are provided by residues 7-12 (GAGNVG) and aspartate 32. Arginine 81 and arginine 87 together coordinate substrate. NAD(+)-binding positions include asparagine 94 and 117–119 (VSN). Substrate-binding residues include asparagine 119 and arginine 150. Histidine 174 acts as the Proton acceptor in catalysis.

It belongs to the LDH/MDH superfamily. MDH type 3 family.

The enzyme catalyses (S)-malate + NAD(+) = oxaloacetate + NADH + H(+). In terms of biological role, catalyzes the reversible oxidation of malate to oxaloacetate. The protein is Malate dehydrogenase of Pelodictyon phaeoclathratiforme (strain DSM 5477 / BU-1).